A 616-amino-acid chain; its full sequence is Proline dehydrogenase 1, mitochondrial (616 aa).

Belongs to the proline oxidase family. Requires FAD as cofactor.

The protein localises to the mitochondrion matrix. The catalysed reaction is L-proline + a quinone = (S)-1-pyrroline-5-carboxylate + a quinol + H(+). It participates in amino-acid degradation; L-proline degradation into L-glutamate; L-glutamate from L-proline: step 1/2. In terms of biological role, converts proline to delta-1-pyrroline-5-carboxylate. Through proline catabolism, promotes reactive oxygen species (ROS) production and the transcription of skn-1 target genes in response to bacterial infection by P.aeruginosa. This Caenorhabditis elegans protein is Proline dehydrogenase 1, mitochondrial.